Consider the following 103-residue polypeptide: Large ribosomal subunit protein uL24 (103 aa).

Belongs to the universal ribosomal protein uL24 family. In terms of assembly, part of the 50S ribosomal subunit.

Its function is as follows. One of two assembly initiator proteins, it binds directly to the 5'-end of the 23S rRNA, where it nucleates assembly of the 50S subunit. Functionally, one of the proteins that surrounds the polypeptide exit tunnel on the outside of the subunit. This chain is Large ribosomal subunit protein uL24, found in Roseobacter denitrificans (strain ATCC 33942 / OCh 114) (Erythrobacter sp. (strain OCh 114)).